The sequence spans 486 residues: MEEWVEKYRPKSLNDVAGHNKTKQALIEWIESIIGGQNQKPILLAGPPGSGKTTLAYAIANDYAFDVIELNASDKRNKDVISQVVGTAATSKSLTGRRTLIVLDEVDGLSGNDDRGGVAEIIKVLKTAENPVILTANDVYKPALMTLRNSVNLINVGSVHTNSIPPVLRRIALKEGFEIDEKIIKMIASHSGGDLRAAINDLQSLATGGSIEIEDAKELPDRDSEKSIFDAMRIIMKTTHYDIATSATRDVKEDIGTIEEWISENLPKEYLKYKDLAEGYDYLSKSDVFLGRVYRRQYFGLWRYASALMTAGTALAKEEKYRGFTRYGPPAIFTKLSRTKGSRQKMKDILKKIALKTHTSTKRARNTVDYLTVIFESNAEVSAELVEYYELTKDEIEFLTNKTITKKILSVIAGKKPKVKKETPKKTEKPKEVMPIIPKRPRISEPPKEPLKEVIEETLEKSVEKADTKEEKKKDPKKQATLDSFF.

46–53 (GPPGSGKT) contributes to the ATP binding site. The segment at 419-486 (VKKETPKKTE…KKQATLDSFF (68 aa)) is disordered. 2 stretches are compositionally biased toward basic and acidic residues: residues 420–432 (KKET…KPKE) and 442–480 (RISE…KKQA).

This sequence belongs to the activator 1 small subunits family. RfcL subfamily. As to quaternary structure, heteromultimer composed of small subunits (RfcS) and large subunits (RfcL).

Functionally, part of the RFC clamp loader complex which loads the PCNA sliding clamp onto DNA. The polypeptide is Replication factor C large subunit (Methanococcus maripaludis (strain DSM 14266 / JCM 13030 / NBRC 101832 / S2 / LL)).